Reading from the N-terminus, the 470-residue chain is Uronate isomerase (470 aa).

Belongs to the metallo-dependent hydrolases superfamily. Uronate isomerase family.

It carries out the reaction D-glucuronate = D-fructuronate. It catalyses the reaction aldehydo-D-galacturonate = keto-D-tagaturonate. It participates in carbohydrate metabolism; pentose and glucuronate interconversion. In Escherichia coli O157:H7 (strain EC4115 / EHEC), this protein is Uronate isomerase.